The following is a 78-amino-acid chain: Large ribosomal subunit protein bL28 (78 aa).

The protein belongs to the bacterial ribosomal protein bL28 family.

This is Large ribosomal subunit protein bL28 from Escherichia coli O139:H28 (strain E24377A / ETEC).